A 172-amino-acid polypeptide reads, in one-letter code: uncharacterized protein (172 aa).

This is an uncharacterized protein from Saccharomyces cerevisiae (strain ATCC 204508 / S288c) (Baker's yeast).